A 241-amino-acid chain; its full sequence is Purine nucleoside phosphorylase DeoD-type (241 aa).

Residue His5 participates in a purine D-ribonucleoside binding. Phosphate contacts are provided by residues Gly21, Arg25, Arg44, and 88-91 (RVGS). Residues 180 to 182 (EME) and 204 to 205 (SD) contribute to the a purine D-ribonucleoside site. The active-site Proton donor is Asp205.

The protein belongs to the PNP/UDP phosphorylase family. In terms of assembly, homohexamer; trimer of homodimers.

The catalysed reaction is a purine D-ribonucleoside + phosphate = a purine nucleobase + alpha-D-ribose 1-phosphate. It catalyses the reaction a purine 2'-deoxy-D-ribonucleoside + phosphate = a purine nucleobase + 2-deoxy-alpha-D-ribose 1-phosphate. Its function is as follows. Catalyzes the reversible phosphorolytic breakdown of the N-glycosidic bond in the beta-(deoxy)ribonucleoside molecules, with the formation of the corresponding free purine bases and pentose-1-phosphate. This Yersinia enterocolitica serotype O:8 / biotype 1B (strain NCTC 13174 / 8081) protein is Purine nucleoside phosphorylase DeoD-type.